Here is a 154-residue protein sequence, read N- to C-terminus: SsrA-binding protein (154 aa).

Belongs to the SmpB family.

It localises to the cytoplasm. Required for rescue of stalled ribosomes mediated by trans-translation. Binds to transfer-messenger RNA (tmRNA), required for stable association of tmRNA with ribosomes. tmRNA and SmpB together mimic tRNA shape, replacing the anticodon stem-loop with SmpB. tmRNA is encoded by the ssrA gene; the 2 termini fold to resemble tRNA(Ala) and it encodes a 'tag peptide', a short internal open reading frame. During trans-translation Ala-aminoacylated tmRNA acts like a tRNA, entering the A-site of stalled ribosomes, displacing the stalled mRNA. The ribosome then switches to translate the ORF on the tmRNA; the nascent peptide is terminated with the 'tag peptide' encoded by the tmRNA and targeted for degradation. The ribosome is freed to recommence translation, which seems to be the essential function of trans-translation. The chain is SsrA-binding protein from Streptococcus thermophilus (strain CNRZ 1066).